A 546-amino-acid chain; its full sequence is Src substrate cortactin (546 aa).

The disordered stretch occupies residues 1–28 (MWKASAGHAVSITQDDGGADDWETDPDF). Acidic residues predominate over residues 17–28 (GGADDWETDPDF). Cortactin repeat units follow at residues 80–116 (ASHG…SQVD), 117–153 (SVRG…SQKD), 154–190 (YSSG…SQKD), 191–227 (YSKG…SQKD), 228–264 (YVKG…SQKD), and 265–301 (YKTG…SQQD). An N6-acetyllysine mark is found at lysine 87 and lysine 107. Serine 113 is modified (phosphoserine). At arginine 119 the chain carries Omega-N-methylarginine. Lysine 124 is modified (N6-acetyllysine). Lysine 144 is subject to N6-acetyllysine; alternate. Lysine 144 participates in a covalent cross-link: Glycyl lysine isopeptide (Lys-Gly) (interchain with G-Cter in SUMO1); alternate. Residue lysine 144 forms a Glycyl lysine isopeptide (Lys-Gly) (interchain with G-Cter in SUMO2); alternate linkage. At serine 150 the chain carries Phosphoserine. N6-acetyllysine is present on residues lysine 152, lysine 161, and lysine 171. Lysine 181 carries the N6-acetyllysine; alternate modification. Lysine 181 is covalently cross-linked (Glycyl lysine isopeptide (Lys-Gly) (interchain with G-Cter in SUMO1); alternate). Residue lysine 181 forms a Glycyl lysine isopeptide (Lys-Gly) (interchain with G-Cter in SUMO2); alternate linkage. N6-acetyllysine is present on residues lysine 193 and lysine 198. Lysine 218 is covalently cross-linked (Glycyl lysine isopeptide (Lys-Gly) (interchain with G-Cter in SUMO1)). N6-acetyllysine is present on lysine 235. Serine 261 is modified (phosphoserine). An N6-acetyllysine modification is found at lysine 272. Lysine 295 carries the post-translational modification N6-acetyllysine; alternate. A Glycyl lysine isopeptide (Lys-Gly) (interchain with G-Cter in SUMO2); alternate cross-link involves residue lysine 295. A Cortactin 7; truncated repeat occupies 302–324 (YAKGFGGKYGVQKDRMDKNASTF). Residues lysine 304, lysine 309, lysine 314, and lysine 346 each carry the N6-acetyllysine modification. Residues 348 to 401 (SNIRANFENLAKEREQEDRRKAEAERAQRMAKERQEQEEARRKLEEQARAKKQT) adopt a coiled-coil conformation. Positions 355 to 424 (ENLAKEREQE…PPSSPIYEDA (70 aa)) are disordered. A compositionally biased stretch (basic and acidic residues) spans 357-396 (LAKEREQEDRRKAEAERAQRMAKERQEQEEARRKLEEQAR). Threonine 401 bears the Phosphothreonine mark. Phosphoserine is present on residues serine 405, serine 407, serine 417, and serine 418. Phosphotyrosine occurs at positions 421 and 442. Serine 443 bears the Phosphoserine mark. Tyrosine 466 carries the phosphotyrosine; by FAK1 modification. Phosphotyrosine; by SRC is present on residues tyrosine 482 and tyrosine 485. An SH3 domain is found at 488–546 (DLGITAIALYDYQAAGDDEISFDPDDIITNIEMIDDGWWRGVCKGRYGLFPANYVELRQ).

Part of a complex composed of NEDD9, AURKA and CTTN; within the complex NEDD9 acts as a scaffold protein and is required for complex formation. Interacts (via N-terminus) with NEDD9. Identified in a complex containing FGFR4, NCAM1, CDH2, PLCG1, FRS2, SRC, SHC1, GAP43 and CTTN. Forms a complex with ABL1 and MYLK. Interacts with SHANK2 and SHANK3 (via its SH3 domain). Interacts with PLXDC2 and SRCIN1. Interacts with SAMSN1 (via SH3 domain). Interacts (via SH3 domain) with ASAP1 (via Pro-rich region). Interacts (via SH3 domain) with DNM2. Interacts with ACTN1. Interacts with FER. Interacts with KCNA2 (via non-phosphorylated C-terminus). Interacts with FGD1. Interacts with ABL2. Interacts with CTTNBP2NL; this interaction may target CTTN to stress fibers. Interacts with CTTNBP2; this interaction may target CTTN at the cell cortex or dendritic spines. Interacts with KCNH1. Interacts (via SH3 domain) with DIP2A (via N-terminus); the interaction enhances CTTN acetylation and is required for proper synaptic transmission. Interacts with XIRP1 (via N-terminus); the interaction promotes CTTN localization to intercalated disks in cardiomyocytes. Post-translationally, acetylated. In terms of processing, phosphorylated by FER. Phosphorylated in response to FGR activation. Phosphorylation by SRC promotes MYLK binding. Phosphorylated on tyrosine residues in response to CHRM1 activation. Phosphorylated by PTK2/FAK1 in response to cell adhesion. Tyrosine phosphorylation in transformed cells may contribute to cellular growth regulation and transformation. Phosphorylated by PKN2 at both serine and threonine residues in a GTP-bound Rac1-dependent manner in hyaluronan-induced astrocytes and hence down-regulated CTTN ability to associate with filamentous actin. As to expression, expressed at intercalated disks in the heart (at protein level). Expressed in most tissues, except in B-lymphocytes or plasma cells.

The protein localises to the cytoplasm. The protein resides in the cytoskeleton. It is found in the cell projection. Its subcellular location is the lamellipodium. It localises to the ruffle. The protein localises to the dendrite. The protein resides in the cell membrane. It is found in the podosome. Its subcellular location is the cell junction. It localises to the focal adhesion. The protein localises to the membrane. The protein resides in the clathrin-coated pit. It is found in the dendritic spine. Its subcellular location is the cell cortex. It localises to the endoplasmic reticulum. In terms of biological role, contributes to the organization of the actin cytoskeleton and cell shape. Plays a role in the formation of lamellipodia and in cell migration. Plays a role in the regulation of neuron morphology, axon growth and formation of neuronal growth cones. Through its interaction with CTTNBP2, involved in the regulation of neuronal spine density. Plays a role in focal adhesion assembly and turnover. In complex with ABL1 and MYLK regulates cortical actin-based cytoskeletal rearrangement critical to sphingosine 1-phosphate (S1P)-mediated endothelial cell (EC) barrier enhancement. Plays a role in intracellular protein transport and endocytosis, and in modulating the levels of potassium channels present at the cell membrane. Plays a role in receptor-mediated endocytosis via clathrin-coated pits. Required for stabilization of KCNH1 channels at the cell membrane. This chain is Src substrate cortactin (Cttn), found in Mus musculus (Mouse).